Consider the following 393-residue polypeptide: Probable chromate transport protein (393 aa).

Transmembrane regions (helical) follow at residues 22-42 (YFLK…GYMH), 90-110 (ALVG…LGWA), 119-139 (WMQA…AISA), 146-166 (TVGT…TTIV), 201-221 (FIGL…TSLL), 231-251 (AGAF…GGVV), 261-281 (QFLD…ITTG), 282-302 (FIGF…AMFI), 327-347 (FVNG…VVLG), and 370-390 (LGKK…GVIF).

Belongs to the chromate ion transporter (CHR) (TC 2.A.51) family.

It is found in the cell membrane. May function in the active transport of chromate into the cell under sulfur-deficient conditions. The sequence is that of Probable chromate transport protein (srpC) from Synechococcus elongatus (strain ATCC 33912 / PCC 7942 / FACHB-805) (Anacystis nidulans R2).